The sequence spans 71 residues: UPF0352 protein Spea_1764 (71 aa).

It belongs to the UPF0352 family.

In Shewanella pealeana (strain ATCC 700345 / ANG-SQ1), this protein is UPF0352 protein Spea_1764.